Reading from the N-terminus, the 180-residue chain is MSALTIYSDKDASQPQWHSTDAAEIAQQLNAKGVRFERWVADRDLGQAPAPETVITAYQHAIDKLVAEKGYQSWDVISLRADNPQKEALRAKFLNEHTHGEDEVRFFVEGAGLFCLHIGDQVYQVLCEKNDLISVPAGTPHWFDMGSEPNFTAIRIFDNPEGWVAQFTGDAIADAYPRLL.

Fe(2+) is bound by residues His97, His99, Glu103, and His141. Ni(2+) is bound by residues His97, His99, Glu103, and His141.

It belongs to the acireductone dioxygenase (ARD) family. Monomer. The cofactor is Fe(2+). Ni(2+) is required as a cofactor.

The enzyme catalyses 1,2-dihydroxy-5-(methylsulfanyl)pent-1-en-3-one + O2 = 3-(methylsulfanyl)propanoate + CO + formate + 2 H(+). It catalyses the reaction 1,2-dihydroxy-5-(methylsulfanyl)pent-1-en-3-one + O2 = 4-methylsulfanyl-2-oxobutanoate + formate + 2 H(+). It participates in amino-acid biosynthesis; L-methionine biosynthesis via salvage pathway; L-methionine from S-methyl-5-thio-alpha-D-ribose 1-phosphate: step 5/6. In terms of biological role, catalyzes 2 different reactions between oxygen and the acireductone 1,2-dihydroxy-3-keto-5-methylthiopentene (DHK-MTPene) depending upon the metal bound in the active site. Fe-containing acireductone dioxygenase (Fe-ARD) produces formate and 2-keto-4-methylthiobutyrate (KMTB), the alpha-ketoacid precursor of methionine in the methionine recycle pathway. Ni-containing acireductone dioxygenase (Ni-ARD) produces methylthiopropionate, carbon monoxide and formate, and does not lie on the methionine recycle pathway. In Citrobacter koseri (strain ATCC BAA-895 / CDC 4225-83 / SGSC4696), this protein is Acireductone dioxygenase.